The sequence spans 136 residues: Protein NrdI (136 aa).

It belongs to the NrdI family.

In terms of biological role, probably involved in ribonucleotide reductase function. This Escherichia coli O1:K1 / APEC protein is Protein NrdI.